The following is a 423-amino-acid chain: MAKLSPLTLIFIAACLSRILHLTILSGLSKALPLFDTSPSLLLSSPPPALRWDAIHFASVAYNGYEYEQQVAFQPGWLAVMRLAGEGVRFIRAASVVELKDVILGGTIVANVAFVAATLVLYKLTKHIFNPTFAFLTSLLYLLPPTATPSAPYTEPIYSLLTFSGIYLLSIKRQMVLAGLCFAGATTIRSTGIFNSITLMCFAVFGDAHIFDLDPKDYCKIRKKLKPFLSAILVVAPFFMFQHYTETVFCTRELKRASTARPWCSNSPPVSYGFVQKLYWNVGPFEYWTVSQLPNFALAMPILFSSLAGVVKFFSHLVSSSQVLNHGTEEIPPPPILFELYSVHVLTMALLLFTSHTQITLRVCLGDPVVWWNAVKLGFDNVQIGEAPMGQVKVNKFGRYWIGWTVVWGAVAAVLWAGHYPPA.

Helical transmembrane passes span 7 to 27, 102 to 122, 128 to 148, 151 to 171, 191 to 211, 228 to 248, 298 to 318, 333 to 353, and 400 to 420; these read LTLIFIAACLSRILHLTILSG, VILGGTIVANVAFVAATLVLY, IFNPTFAFLTSLLYLLPPTAT, APYTEPIYSLLTFSGIYLLSI, TGIFNSITLMCFAVFGDAHIF, FLSAILVVAPFFMFQHYTETV, LAMPILFSSLAGVVKFFSHLV, PPPILFELYSVHVLTMALLLF, and YWIGWTVVWGAVAAVLWAGHY.

It belongs to the PIGV family.

The protein localises to the endoplasmic reticulum membrane. The protein operates within glycolipid biosynthesis; glycosylphosphatidylinositol-anchor biosynthesis. Functionally, mannosyltransferase involved in glycosylphosphatidylinositol-anchor biosynthesis. Transfers the second mannose to the glycosylphosphatidylinositol during GPI precursor assembly. The polypeptide is GPI mannosyltransferase 2 (GPI18) (Cryptococcus neoformans var. neoformans serotype D (strain B-3501A) (Filobasidiella neoformans)).